We begin with the raw amino-acid sequence, 309 residues long: Probable manganese-dependent inorganic pyrophosphatase (309 aa).

6 residues coordinate Mn(2+): histidine 9, aspartate 13, aspartate 15, aspartate 75, histidine 97, and aspartate 149.

It belongs to the PPase class C family. The cofactor is Mn(2+).

The protein resides in the cytoplasm. It carries out the reaction diphosphate + H2O = 2 phosphate + H(+). This chain is Probable manganese-dependent inorganic pyrophosphatase, found in Bacillus velezensis (strain DSM 23117 / BGSC 10A6 / LMG 26770 / FZB42) (Bacillus amyloliquefaciens subsp. plantarum).